We begin with the raw amino-acid sequence, 688 residues long: GTPase IMAP family member 8 (688 aa).

Residues 1–14 (MATSSHQGAAAGSQ) show a composition bias toward low complexity. The disordered stretch occupies residues 1-42 (MATSSHQGAAAGSQAEHRSCEASVGQGERPSASQGQEGNFKQ). Residues 31-42 (SASQGQEGNFKQ) show a composition bias toward polar residues. AIG1-type G domains lie at 46–247 (TSTL…MESS), 282–472 (MPEL…VIRE), and 473–677 (KELL…GQLK). The interval 55–62 (GKQGAGKS) is G1. GTP is bound by residues 55–63 (GKQGAGKSA) and S76. Residues 82–86 (MVTDR) form a G2 region. The segment at 103–106 (DTPD) is G3. The interval 172 to 175 (TRED) is G4. Residues 173-175 (RED) and N209 each bind GTP. Residues 208 to 210 (NNK) form a G5 region.

It belongs to the TRAFAC class TrmE-Era-EngA-EngB-Septin-like GTPase superfamily. AIG1/Toc34/Toc159-like paraseptin GTPase family. IAN subfamily. In terms of tissue distribution, abundantly expressed in the thymus (in thymocytes), spleen (in splenocytes), lymph node, followed by bone marrow and lung.

It is found in the endoplasmic reticulum. It localises to the golgi apparatus. The protein localises to the mitochondrion. Its subcellular location is the cytoplasm. The protein resides in the cytosol. Exerts an anti-apoptotic effect in the immune system and is involved in responses to infections. The chain is GTPase IMAP family member 8 (Gimap8) from Mus musculus (Mouse).